Here is a 443-residue protein sequence, read N- to C-terminus: Inactive polypeptide N-acetylgalactosaminyltransferase-like protein 5 (443 aa).

Topologically, residues 1-4 (MRNA) are cytoplasmic. Residues 5-27 (IIRCLFYGSLTFGIWTALLFIYL) traverse the membrane as a helical; Signal-anchor for type II membrane protein segment. Over 28 to 443 (HHNHVSNWQK…PELEASVNRS (416 aa)) the chain is Lumenal. N87 carries an N-linked (GlcNAc...) asparagine glycan. 2 disulfides stabilise this stretch: C124–C355 and C346–C422. The segment at 133-243 (LPTASIVICF…RVWLEPLLHA (111 aa)) is catalytic subdomain A. Substrate is bound by residues D174 and R204. D227 contributes to the Mn(2+) binding site. S228 is a binding site for substrate. Mn(2+) is bound at residue H229. The catalytic subdomain B stretch occupies residues 301-363 (PIRSPAMSGG…PCSRVGHISK (63 aa)). W332 contributes to the substrate binding site. H360 provides a ligand contact to Mn(2+).

This sequence belongs to the glycosyltransferase 2 family. GalNAc-T subfamily. Mn(2+) serves as cofactor. Expressed in testis.

It is found in the late endosome membrane. Functionally, probable inactive glycosyltransferase required during spermatid development. May participate in protein loading into the acrosomes and accumulation of ubiquitin-proteasome systems around the head-tail coupling apparatus region. This is Inactive polypeptide N-acetylgalactosaminyltransferase-like protein 5 (GALNTL5) from Macaca fascicularis (Crab-eating macaque).